A 268-amino-acid chain; its full sequence is (+)-cis,trans-nepetalactol synthase NEPS2 (268 aa).

NAD(+)-binding positions include 16–22, 41–43, 65–66, Asn-92, 163–167, and 196–200; these read GGASGIG, DIQ, DI, YVMSK, and VLTPL.

It belongs to the short-chain dehydrogenases/reductases (SDR) family.

It catalyses the reaction (S)-8-oxocitronellyl enol = cis-trans-nepetalactol. In terms of biological role, functions as a non-oxidoreductive cyclase to promote the formation of cis-trans-nepetalactol. Cis-trans-nepetalactol is then oxidized by NEPS1 into cis-trans-nepetalactone, which belongs to a family of metabolites that are both insect-repellent and have euphoric effect in cats. Binds NAD(+) as classical short-chain dehydrogenase/reductase (SDR), but does not utilize it for its redox-neutral cyclase activity. In Nepeta racemosa (Catmint), this protein is (+)-cis,trans-nepetalactol synthase NEPS2.